A 295-amino-acid polypeptide reads, in one-letter code: Hydroxyquinol 1,2-dioxygenase (295 aa).

Fe cation is bound by residues tyrosine 165, tyrosine 200, histidine 224, and histidine 226.

This sequence belongs to the intradiol ring-cleavage dioxygenase family. It depends on Fe(3+) as a cofactor.

The enzyme catalyses benzene-1,2,4-triol + O2 = maleylacetate + 2 H(+). It functions in the pathway aromatic compound metabolism. In terms of biological role, involved in the gamma-resorcylate (2,6-dihydroxybenzoate) catabolism. Catalyzes the conversion of hydroxyquinol to malelylacetate. In Rhizobium sp. (strain MTP-10005), this protein is Hydroxyquinol 1,2-dioxygenase.